A 623-amino-acid polypeptide reads, in one-letter code: GATA zinc finger domain-containing protein 6 (623 aa).

3 disordered regions span residues 137–156, 167–197, and 245–289; these read IISPPQQSQQPPPPTSGNNF, INNNSNNNNNNNNCKSYKKQQTSKGSATAST, and PTTT…TAST. The span at 167–179 shows a compositional bias: low complexity; the sequence is INNNSNNNNNNNN. Residues 185–197 are compositionally biased toward polar residues; it reads KQQTSKGSATAST. A GATA-type zinc finger spans residues 320-345; that stretch reads CHSCGETQTSQWRRGPDGCKSLCNAC. Residues 398-509 form a disordered region; sequence IQQQQQKDDH…SINHNDKLIN (112 aa). Low complexity predominate over residues 410–482; it reads LSRPSSFSSQ…TSPTISSESL (73 aa). A compositionally biased stretch (polar residues) spans 483–502; the sequence is NFSSATNTPTNLSPNLQSIN.

In Dictyostelium discoideum (Social amoeba), this protein is GATA zinc finger domain-containing protein 6 (gtaF).